A 199-amino-acid chain; its full sequence is ATP-dependent Clp protease proteolytic subunit (199 aa).

Ser99 (nucleophile) is an active-site residue. His124 is a catalytic residue.

It belongs to the peptidase S14 family. As to quaternary structure, fourteen ClpP subunits assemble into 2 heptameric rings which stack back to back to give a disk-like structure with a central cavity, resembling the structure of eukaryotic proteasomes.

It is found in the cytoplasm. The catalysed reaction is Hydrolysis of proteins to small peptides in the presence of ATP and magnesium. alpha-casein is the usual test substrate. In the absence of ATP, only oligopeptides shorter than five residues are hydrolyzed (such as succinyl-Leu-Tyr-|-NHMec, and Leu-Tyr-Leu-|-Tyr-Trp, in which cleavage of the -Tyr-|-Leu- and -Tyr-|-Trp bonds also occurs).. Functionally, cleaves peptides in various proteins in a process that requires ATP hydrolysis. Has a chymotrypsin-like activity. Plays a major role in the degradation of misfolded proteins. The polypeptide is ATP-dependent Clp protease proteolytic subunit (Moorella thermoacetica (strain ATCC 39073 / JCM 9320)).